The primary structure comprises 432 residues: Amino-acid acetyltransferase (432 aa).

The N-acetyltransferase domain occupies 286-425 (EQLREAGIED…ASLYNFQRNS (140 aa)).

This sequence belongs to the acetyltransferase family. ArgA subfamily.

The protein localises to the cytoplasm. The catalysed reaction is L-glutamate + acetyl-CoA = N-acetyl-L-glutamate + CoA + H(+). The protein operates within amino-acid biosynthesis; L-arginine biosynthesis; N(2)-acetyl-L-ornithine from L-glutamate: step 1/4. This chain is Amino-acid acetyltransferase, found in Pseudomonas aeruginosa (strain LESB58).